Here is a 134-residue protein sequence, read N- to C-terminus: Holo-[acyl-carrier-protein] synthase (134 aa).

Mg(2+) is bound by residues Asp8 and Glu56.

This sequence belongs to the P-Pant transferase superfamily. AcpS family. Mg(2+) is required as a cofactor.

It is found in the cytoplasm. The enzyme catalyses apo-[ACP] + CoA = holo-[ACP] + adenosine 3',5'-bisphosphate + H(+). Functionally, transfers the 4'-phosphopantetheine moiety from coenzyme A to a Ser of acyl-carrier-protein. The sequence is that of Holo-[acyl-carrier-protein] synthase from Clostridium kluyveri (strain ATCC 8527 / DSM 555 / NBRC 12016 / NCIMB 10680 / K1).